We begin with the raw amino-acid sequence, 516 residues long: Maturase K (516 aa).

This sequence belongs to the intron maturase 2 family. MatK subfamily.

It localises to the plastid. The protein localises to the chloroplast. Functionally, usually encoded in the trnK tRNA gene intron. Probably assists in splicing its own and other chloroplast group II introns. The chain is Maturase K from Colchicum speciosum (Giant meadow saffron).